We begin with the raw amino-acid sequence, 407 residues long: Probable tRNA sulfurtransferase (407 aa).

Residues 61 to 165 form the THUMP domain; the sequence is NEITYRLSKI…LDAIYMYEEV (105 aa). Residues 183-184, 208-209, Arg-265, Gly-287, and Gln-296 contribute to the ATP site; these read ML and HF.

The protein belongs to the ThiI family.

It localises to the cytoplasm. The enzyme catalyses [ThiI sulfur-carrier protein]-S-sulfanyl-L-cysteine + a uridine in tRNA + 2 reduced [2Fe-2S]-[ferredoxin] + ATP + H(+) = [ThiI sulfur-carrier protein]-L-cysteine + a 4-thiouridine in tRNA + 2 oxidized [2Fe-2S]-[ferredoxin] + AMP + diphosphate. It carries out the reaction [ThiS sulfur-carrier protein]-C-terminal Gly-Gly-AMP + S-sulfanyl-L-cysteinyl-[cysteine desulfurase] + AH2 = [ThiS sulfur-carrier protein]-C-terminal-Gly-aminoethanethioate + L-cysteinyl-[cysteine desulfurase] + A + AMP + 2 H(+). It functions in the pathway cofactor biosynthesis; thiamine diphosphate biosynthesis. Its function is as follows. Catalyzes the ATP-dependent transfer of a sulfur to tRNA to produce 4-thiouridine in position 8 of tRNAs, which functions as a near-UV photosensor. Also catalyzes the transfer of sulfur to the sulfur carrier protein ThiS, forming ThiS-thiocarboxylate. This is a step in the synthesis of thiazole, in the thiamine biosynthesis pathway. The sulfur is donated as persulfide by IscS. This chain is Probable tRNA sulfurtransferase, found in Staphylococcus aureus (strain JH1).